Consider the following 416-residue polypeptide: Argininosuccinate synthase (416 aa).

Residues 19–27 (AYSGGLDTS) and A46 contribute to the ATP site. Y97 and S102 together coordinate L-citrulline. G127 contacts ATP. 3 residues coordinate L-aspartate: T129, N133, and D134. Residue N133 coordinates L-citrulline. L-citrulline contacts are provided by R137, S188, S197, E273, and Y285.

The protein belongs to the argininosuccinate synthase family. Type 1 subfamily. In terms of assembly, homotetramer.

It localises to the cytoplasm. It catalyses the reaction L-citrulline + L-aspartate + ATP = 2-(N(omega)-L-arginino)succinate + AMP + diphosphate + H(+). Its pathway is amino-acid biosynthesis; L-arginine biosynthesis; L-arginine from L-ornithine and carbamoyl phosphate: step 2/3. This chain is Argininosuccinate synthase, found in Granulibacter bethesdensis (strain ATCC BAA-1260 / CGDNIH1).